A 265-amino-acid chain; its full sequence is Urease accessory protein UreH (265 aa).

The protein belongs to the UreD family. In terms of assembly, ureH, UreF and UreG form a complex that acts as a GTP-hydrolysis-dependent molecular chaperone, activating the urease apoprotein by helping to assemble the nickel containing metallocenter of UreC. The UreE protein probably delivers the nickel.

The protein localises to the cytoplasm. Its function is as follows. Required for maturation of urease via the functional incorporation of the urease nickel metallocenter. The sequence is that of Urease accessory protein UreH from Helicobacter pylori (strain HPAG1).